The chain runs to 510 residues: NAD(P)H-quinone oxidoreductase subunit 2 A, chloroplastic (510 aa).

The next 13 helical transmembrane spans lie at 24–44, 57–77, 99–119, 124–144, 149–169, 183–203, 227–247, 295–315, 323–343, 354–374, 395–415, 418–438, and 484–504; these read LLLFHGSFIFPECILIFGLIL, IPWLYFISSTSLVMSIAALLF, IFQFLILLCSTLCIPLSVEYI, MAITEFLLFVLTATLGGMFLC, LITIFVAPECFSLCSYLLSGY, YLLMGGASSSILVHGFSWLYG, PGISIALIFITVGIGFKLSLA, WHLLLEILAILSMILGNLIAI, MLAYSSIGQIGYVIIGIIVGD, YMLFYISMNLGTFACIVSFGL, ALSLALCLLSLGGLPPLAGFF, LHLFWCGWQAGLYFLVSIGLL, and MIVCVIASTIPGISMNPIIAI.

Belongs to the complex I subunit 2 family. In terms of assembly, NDH is composed of at least 16 different subunits, 5 of which are encoded in the nucleus.

Its subcellular location is the plastid. It is found in the chloroplast thylakoid membrane. The catalysed reaction is a plastoquinone + NADH + (n+1) H(+)(in) = a plastoquinol + NAD(+) + n H(+)(out). It catalyses the reaction a plastoquinone + NADPH + (n+1) H(+)(in) = a plastoquinol + NADP(+) + n H(+)(out). NDH shuttles electrons from NAD(P)H:plastoquinone, via FMN and iron-sulfur (Fe-S) centers, to quinones in the photosynthetic chain and possibly in a chloroplast respiratory chain. The immediate electron acceptor for the enzyme in this species is believed to be plastoquinone. Couples the redox reaction to proton translocation, and thus conserves the redox energy in a proton gradient. The sequence is that of NAD(P)H-quinone oxidoreductase subunit 2 A, chloroplastic from Ranunculus macranthus (Large buttercup).